Reading from the N-terminus, the 152-residue chain is Glutaredoxin-related protein 5, mitochondrial (152 aa).

The N-terminal 31 residues, 1 to 31, are a transit peptide targeting the mitochondrion; that stretch reads MSASLSRAAAALLRWGRSAGGGGLPGAGVRA. The 104-residue stretch at 38–141 folds into the Glutaredoxin domain; the sequence is AEQLDALVKK…EELKKLGIRS (104 aa). Lysine 55 is a binding site for glutathione. Lysine 55 bears the N6-succinyllysine mark. Residue cysteine 63 coordinates [2Fe-2S] cluster. Glutathione-binding positions include 93-97, isoleucine 105, and 118-119; these read RQGIK and CD. Phosphoserine is present on serine 151.

The protein belongs to the glutaredoxin family. Monothiol subfamily. In terms of assembly, homodimer. Interacts with ISCU. Interacts with BOLA1. Detected in bone, liver, muscle and kidney.

It localises to the mitochondrion matrix. Monothiol glutaredoxin involved in mitochondrial iron-sulfur (Fe/S) cluster transfer. Receives 2Fe/2S clusters from scaffold protein ISCU and mediates their transfer to apoproteins, to the 4Fe/FS cluster biosynthesis machinery, or export from mitochondrion. Required for normal regulation of hemoglobin synthesis by the iron-sulfur protein ACO1. The sequence is that of Glutaredoxin-related protein 5, mitochondrial (Glrx5) from Mus musculus (Mouse).